Here is a 1111-residue protein sequence, read N- to C-terminus: Lysylphosphatidylglycerol biosynthesis bifunctional protein LysX (1111 aa).

The tract at residues 1-612 (MTLTSPPRTR…VLHHDGTAPD (612 aa)) is phosphatidylglycerol lysyltransferase. The next 7 membrane-spanning stretches (helical) occupy residues 18-38 (VPAA…IASV), 60-80 (FPDT…ALAA), 84-104 (IAWW…VADL), 118-138 (VIGL…RPLF), 152-172 (GVLA…LELF), 209-229 (VNAL…IVLF), and 308-328 (AWLA…ASVG). Residues 613 to 1111 (MSGLRTDTAD…TLPFPLARPR (499 aa)) form a lysine--tRNA ligase region. Positions 674-747 (VAGRVLRIRD…GTRSLLVRHW (74 aa)) form a DNA-binding region, OB. The Mg(2+) site is built by Asp1023 and Glu1030.

In the N-terminal section; belongs to the LPG synthetase family. This sequence in the C-terminal section; belongs to the class-II aminoacyl-tRNA synthetase family. Mg(2+) serves as cofactor.

Its subcellular location is the cell membrane. The enzyme catalyses tRNA(Lys) + L-lysine + ATP = L-lysyl-tRNA(Lys) + AMP + diphosphate. It carries out the reaction L-lysyl-tRNA(Lys) + a 1,2-diacyl-sn-glycero-3-phospho-(1'-sn-glycerol) = a 1,2-diacyl-sn-glycero-3-phospho-1'-(3'-O-L-lysyl)-sn-glycerol + tRNA(Lys). Functionally, catalyzes the production of L-lysyl-tRNA(Lys)transfer and the transfer of a lysyl group from L-lysyl-tRNA(Lys) to membrane-bound phosphatidylglycerol (PG), which produces lysylphosphatidylglycerol (LPG), one of the components of the bacterial membrane with a positive net charge. LPG synthesis contributes to the resistance to cationic antimicrobial peptides (CAMPs) and likely protects M.tuberculosis against the CAMPs produced by competiting microorganisms (bacteriocins). In fact, the modification of anionic phosphatidylglycerol with positively charged L-lysine results in repulsion of the peptides. This Mycobacterium sp. (strain JLS) protein is Lysylphosphatidylglycerol biosynthesis bifunctional protein LysX (lysX).